A 151-amino-acid chain; its full sequence is UPF0719 transmembrane protein MAP_1032c (151 aa).

The next 4 helical transmembrane spans lie at 20-40, 60-80, 90-110, and 130-150; these read VATI…FYAV, AVVV…TAIA, LVGV…ALLA, and PGSF…AAAV.

The protein belongs to the UPF0719 family.

The protein localises to the cell membrane. This Mycolicibacterium paratuberculosis (strain ATCC BAA-968 / K-10) (Mycobacterium paratuberculosis) protein is UPF0719 transmembrane protein MAP_1032c.